We begin with the raw amino-acid sequence, 152 residues long: MSKKVAALGLDVGRKRIGVAGCDGTGLIATGITTIVRSSYDQDIAQIKQLVEERNVNLLVVGLPYTMAGEIGSQAKQVQKFARRVAEQLHLPLEYMDERLSSVEAENQLKARKRFSSYDKGLIDQQAAEIILQQWLDLRRSHLQEGGDNLHR.

Belongs to the YqgF nuclease family.

It is found in the cytoplasm. In terms of biological role, could be a nuclease involved in processing of the 5'-end of pre-16S rRNA. The sequence is that of Putative pre-16S rRNA nuclease from Synechocystis sp. (strain ATCC 27184 / PCC 6803 / Kazusa).